The following is a 314-amino-acid chain: 3'-5' exoribonuclease YhaM (314 aa).

The HD domain maps to 163–279 (HVVSMLDLAK…LHYIDNLDAK (117 aa)).

It belongs to the YhaM family.

Functionally, shows a 3'-5' exoribonuclease activity. This chain is 3'-5' exoribonuclease YhaM, found in Bacillus cereus (strain 03BB102).